Consider the following 580-residue polypeptide: MSVRSLPAALRACARLQPHDPAFTFMDYEQDWDGVAITLTWSQLYRRTLNVAQELSRCGSTGDRVVISAPQGLEYVVAFLGALQAGRIAVPLSVPQGGVTDERSDSVLSDSSPVAILTTSSAVDDVVQHVARRPGESPPSIIEVDLLDLDAPNGYTFKEDEYPSTAYLQYTSGSTRTPAGVVMSHQNVRVNFEQLMSGYFADTDGIPPPNSALVSWLPFYHDMGLVIGICAPILGGYPAVLTSPVSFLQRPARWMHLMASDFHAFSAAPNFAFELAARRTTDDDMAGRDLGNILTILSGSERVQAATIKRFADRFARFNLQERVIRPSYGLAEATVYVATSKPGQPPETVDFDTESLSAGHAKPCAGGGATSLISYMLPRSPIVRIVDSDTCIECPDGTVGEIWVHGDNVANGYWQKPDESERTFGGKIVTPSPGTPEGPWLRTGDSGFVTDGKMFIIGRIKDLLIVYGRNHSPDDIEATIQEITRGRCAAISVPGDRSTEKLVAIIELKKRGDSDQDAMARLGAIKREVTSALSSSHGLSVADLVLVAPGSIPITTSGKVRRGACVEQYRQDQFARLDA.

The tract at residues 421-440 (SERTFGGKIVTPSPGTPEGP) is disordered.

Belongs to the ATP-dependent AMP-binding enzyme family.

The catalysed reaction is holo-[mycocerosate synthase] + a long-chain fatty acid + ATP = a long-chain fatty acyl-[mycocerosate synthase] + AMP + diphosphate. It carries out the reaction a long-chain fatty acid + ATP + H(+) = a long-chain fatty acyl-AMP + diphosphate. The enzyme catalyses holo-[mycocerosate synthase] + a long-chain fatty acyl-AMP = a long-chain fatty acyl-[mycocerosate synthase] + AMP + H(+). Its pathway is lipid metabolism; fatty acid biosynthesis. Involved in the biosynthesis of phthiocerol dimycocerosate (PDIM), a cell wall-associated lipid found only in pathogenic mycobacteria. Catalyzes the activation of long-chain fatty acids as acyl-adenylates (acyl-AMP), which are then transferred to the multifunctional polyketide synthase Mas for further chain extension. The polypeptide is Long-chain-fatty-acid--AMP ligase FadD28 (fadD28) (Mycobacterium tuberculosis (strain CDC 1551 / Oshkosh)).